A 292-amino-acid chain; its full sequence is Protease HtpX (292 aa).

2 consecutive transmembrane segments (helical) span residues 5-25 and 35-55; these read VVLFLLTNFAVLILAGIVMSV and GLLVMAAIFGFGGSFISLLLS. H140 serves as a coordination point for Zn(2+). The active site involves E141. Residue H144 participates in Zn(2+) binding. Helical transmembrane passes span 155-175 and 193-213; these read LLQGVLNTFVIVLARVVGGII and IIVFVLEMVFGLFATMIAMWF. Zn(2+) is bound at residue E218.

It belongs to the peptidase M48B family. Zn(2+) serves as cofactor.

Its subcellular location is the cell inner membrane. The sequence is that of Protease HtpX from Xanthomonas campestris pv. campestris (strain 8004).